A 45-amino-acid chain; its full sequence is Iota-conotoxin-like R11.12 (45 aa).

Cystine bridges form between Cys-5–Cys-19, Cys-12–Cys-22, Cys-18–Cys-27, and Cys-21–Cys-36. The residue at position 43 (Leu-43) is a D-leucine. Residue Arg-45 is a propeptide, removed by a carboxypeptidase.

Belongs to the conotoxin I1 superfamily. Expressed by the venom duct.

The protein localises to the secreted. Iota-conotoxins bind to voltage-gated sodium channels (Nav) and act as agonists by shifting the voltage-dependence of activation to more hyperpolarized levels. Produces general excitatory symptoms. In Conus radiatus (Rayed cone), this protein is Iota-conotoxin-like R11.12.